A 343-amino-acid polypeptide reads, in one-letter code: MKLKTKTMEWTGNSLRLLDQRKLPFIEEYVECKTHEEVAHAIKEMIVRGAPAIGVTAAFGYVLGFREYRSGDLKEWMKQVKEVLSRTRPTAVNLFWALNRMEKVFLENLKNENLGEILEEEAMKMAQEDIETNRAIGRNGAELIEDGSTILTHCNAGALATVDYGTALGVIRAAVEAGKRVRVFADETRPYLQGARLTAWELMKDGIEVYVITDNMAGWLMKRGMIDAVVVGADRIALNGDTANKIGTYSLAVLAKRNNVPFYVAAPISTIDPTIKSGDEIPIEERRAEEVTHCGGNRIAPEGVKVLNPAFDVTENSLITAIITEKGVIKPPFEENIKKILGV.

Substrate contacts are provided by residues 48-50 (RGA), Arg88, and Gln193. Asp234 (proton donor) is an active-site residue. 244–245 (NK) is a binding site for substrate.

It belongs to the eIF-2B alpha/beta/delta subunits family. MtnA subfamily.

The catalysed reaction is 5-(methylsulfanyl)-alpha-D-ribose 1-phosphate = 5-(methylsulfanyl)-D-ribulose 1-phosphate. It participates in amino-acid biosynthesis; L-methionine biosynthesis via salvage pathway; L-methionine from S-methyl-5-thio-alpha-D-ribose 1-phosphate: step 1/6. Its function is as follows. Catalyzes the interconversion of methylthioribose-1-phosphate (MTR-1-P) into methylthioribulose-1-phosphate (MTRu-1-P). This Thermotoga neapolitana (strain ATCC 49049 / DSM 4359 / NBRC 107923 / NS-E) protein is Methylthioribose-1-phosphate isomerase.